Reading from the N-terminus, the 329-residue chain is rRNA 2'-O-methyltransferase fibrillarin (329 aa).

The tract at residues 1–85 (MAFGAPRGRG…GGARGGARGG (85 aa)) is disordered. Over residues 13–84 (RGGFGGRGGS…RGGARGGARG (72 aa)) the composition is skewed to gly residues. Residues 181 to 182 (TS), 200 to 201 (EF), 225 to 226 (DA), and 245 to 248 (DVAQ) each bind S-adenosyl-L-methionine.

Belongs to the methyltransferase superfamily. Fibrillarin family. As to quaternary structure, component of box C/D small nucleolar ribonucleoprotein (snoRNP) particles that contain SNU13, NOP1, SIK1/NOP56 and NOP58, plus a guide RNA. By homology to other fibrillarins, some or all of the N-terminal domain arginines are modified to asymmetric dimethylarginine (DMA).

The protein resides in the nucleus. Its subcellular location is the nucleolus. The catalysed reaction is L-glutaminyl-[histone H2A] + S-adenosyl-L-methionine = N(5)-methyl-L-glutaminyl-[histone H2A] + S-adenosyl-L-homocysteine + H(+). In terms of biological role, S-adenosyl-L-methionine-dependent methyltransferase that has the ability to methylate both RNAs and proteins. Involved in pre-rRNA processing. Utilizes the methyl donor S-adenosyl-L-methionine to catalyze the site-specific 2'-hydroxyl methylation of ribose moieties in pre-ribosomal RNA. Site specificity is provided by a guide RNA that base pairs with the substrate. Methylation occurs at a characteristic distance from the sequence involved in base pairing with the guide RNA. Also acts as a protein methyltransferase by mediating methylation of 'Gln-105' of histone H2A (H2AQ105me), a modification that impairs binding of the FACT complex and is specifically present at 35S ribosomal DNA locus. The sequence is that of rRNA 2'-O-methyltransferase fibrillarin (NOP1) from Debaryomyces hansenii (strain ATCC 36239 / CBS 767 / BCRC 21394 / JCM 1990 / NBRC 0083 / IGC 2968) (Yeast).